Here is a 431-residue protein sequence, read N- to C-terminus: Serine--tRNA ligase (431 aa).

Residue 235–237 (TAE) coordinates L-serine. ATP contacts are provided by residues 266 to 268 (RRE) and valine 282. Glutamate 289 contributes to the L-serine binding site. 353-356 (EASS) is a binding site for ATP. Serine 389 contributes to the L-serine binding site.

Belongs to the class-II aminoacyl-tRNA synthetase family. Type-1 seryl-tRNA synthetase subfamily. As to quaternary structure, homodimer. The tRNA molecule binds across the dimer.

The protein localises to the cytoplasm. It carries out the reaction tRNA(Ser) + L-serine + ATP = L-seryl-tRNA(Ser) + AMP + diphosphate + H(+). The catalysed reaction is tRNA(Sec) + L-serine + ATP = L-seryl-tRNA(Sec) + AMP + diphosphate + H(+). The protein operates within aminoacyl-tRNA biosynthesis; selenocysteinyl-tRNA(Sec) biosynthesis; L-seryl-tRNA(Sec) from L-serine and tRNA(Sec): step 1/1. Catalyzes the attachment of serine to tRNA(Ser). Is also able to aminoacylate tRNA(Sec) with serine, to form the misacylated tRNA L-seryl-tRNA(Sec), which will be further converted into selenocysteinyl-tRNA(Sec). The polypeptide is Serine--tRNA ligase (Prosthecochloris aestuarii (strain DSM 271 / SK 413)).